The primary structure comprises 261 residues: MRILITNDDGINAPGLEVLEGIARDLAGPDGEVWTVAPAFEQSGVSHAISYTHPMMIAKLAPRRYAAEGSPADCVLAALYDVLQGARPDLVLSGVNRGNNSAENVLYSGTVGGALEAALQGLPAIALSQFLGPETEGLADPFEGARTHGARIVRLLLEKGLWDDGDYRLFYNVNFPPKPAAGVRGQRVAAQGFRRDTSFGVEPHMSPSGRRFLWIRGGAQHSPTLPGTDAAVNLDGYISITPMRADLTAHDRLAELEALIG.

A divalent metal cation-binding residues include Asp-8, Asp-9, Ser-43, and Asn-96.

The protein belongs to the SurE nucleotidase family. Requires a divalent metal cation as cofactor.

Its subcellular location is the cytoplasm. The enzyme catalyses a ribonucleoside 5'-phosphate + H2O = a ribonucleoside + phosphate. Nucleotidase that shows phosphatase activity on nucleoside 5'-monophosphates. The polypeptide is 5'-nucleotidase SurE (Cereibacter sphaeroides (strain ATCC 17025 / ATH 2.4.3) (Rhodobacter sphaeroides)).